Consider the following 319-residue polypeptide: Non-homologous end joining protein Ku (319 aa).

The region spanning I10–E188 is the Ku domain. Residues Q252–A319 are disordered. Over residues S260–R274 the composition is skewed to basic and acidic residues. Over residues T305 to A319 the composition is skewed to basic residues.

Belongs to the prokaryotic Ku family. As to quaternary structure, homodimer. Interacts with LigD.

Its function is as follows. With LigD forms a non-homologous end joining (NHEJ) DNA repair enzyme, which repairs dsDNA breaks with reduced fidelity. Binds linear dsDNA with 5'- and 3'- overhangs but not closed circular dsDNA nor ssDNA. Recruits and stimulates the ligase activity of LigD. The sequence is that of Non-homologous end joining protein Ku from Streptomyces avermitilis (strain ATCC 31267 / DSM 46492 / JCM 5070 / NBRC 14893 / NCIMB 12804 / NRRL 8165 / MA-4680).